The following is a 169-amino-acid chain: MIILCLTIFANIFKPGWTGANERTFLAVKPDGVQRRLVGEIIRRFERKGFKLVGMKLLQASEAQLRQHYWELREKPFYNGLVKYMSSGPIVAMVWQGLDVVKTARKMLGETNPADSLPGTIRGDYCVEVGRNVIHGSDSVESAAREISLWFEDHELFCYEECGQHWIYA.

The ADP site is built by K29, R105, T111, R122, V129, and N132. H135 functions as the Pros-phosphohistidine intermediate in the catalytic mechanism.

This sequence belongs to the NDK family. Homohexamer. The cofactor is Mg(2+).

The protein localises to the mitochondrion outer membrane. The protein resides in the cytoplasm. It localises to the cytoskeleton. It is found in the cilium basal body. It carries out the reaction a 2'-deoxyribonucleoside 5'-diphosphate + ATP = a 2'-deoxyribonucleoside 5'-triphosphate + ADP. It catalyses the reaction a ribonucleoside 5'-diphosphate + ATP = a ribonucleoside 5'-triphosphate + ADP. Its function is as follows. Catalyzes the phosphorylation of ribonucleosides and deoxyribonucleoside diphosphates, other than ATP, into the corresponding triphosphates with ATP as the major phosphate donor. The ATP gamma phosphate is transferred to the nucleoside diphosphate beta phosphate via a ping-pong mechanism, using a phosphorylated active-site intermediate. Through the catalyzed exchange of gamma-phosphate between di- and triphosphonucleosides participates in regulation of intracellular nucleotide homeostasis. Required for ciliary function during renal development. In terms of biological role, independently of its kinase activity, facilitates mitochondrial tethering prior to membrane fusion through its direct membrane-binding and hexamerization. Implicated in repair of both single- and double-stranded breaks in DNA, independently of its kinase activity. This Danio rerio (Zebrafish) protein is Nucleoside diphosphate kinase 3.